The chain runs to 399 residues: Elongation factor Tu (399 aa).

Residues 10–204 (KPHVNIGTIG…AVDASIPEPE (195 aa)) enclose the tr-type G domain. A G1 region spans residues 19–26 (GHVDHGKT). GTP is bound at residue 19 to 26 (GHVDHGKT). Position 26 (Thr-26) interacts with Mg(2+). The tract at residues 60–64 (GITIN) is G2. The G3 stretch occupies residues 81-84 (DCPG). GTP contacts are provided by residues 81–85 (DCPGH) and 136–139 (NKCD). Positions 136–139 (NKCD) are G4. Residues 174–176 (SGL) are G5.

This sequence belongs to the TRAFAC class translation factor GTPase superfamily. Classic translation factor GTPase family. EF-Tu/EF-1A subfamily. As to quaternary structure, monomer.

Its subcellular location is the cytoplasm. It catalyses the reaction GTP + H2O = GDP + phosphate + H(+). GTP hydrolase that promotes the GTP-dependent binding of aminoacyl-tRNA to the A-site of ribosomes during protein biosynthesis. This Prochlorococcus marinus (strain AS9601) protein is Elongation factor Tu.